The primary structure comprises 665 residues: E3 ubiquitin-protein ligase cblA (665 aa).

The tract at residues 30-50 (NNNNNINNNNNNNNINSNNNG) is disordered. Residues 109–231 (TSLVNYIHYE…NNENNNNNNN (123 aa)) form a 4H region. A Cbl-PTB domain is found at 109-400 (TSLVNYIHYE…PDIFKSILSF (292 aa)). Residues 232–306 (NYNPYELLSN…FKLSVFIKWF (75 aa)) are EF-hand-like. Residues D287, T289, D291, and Y293 each contribute to the Ca(2+) site. Positions 307–400 (GALPVSLGIF…PDIFKSILSF (94 aa)) are SH2-like. Disordered regions lie at residues 437 to 456 (ENNN…INTF) and 467 to 609 (DSSN…NNNN). Residues 467–478 (DSSNSSDTNKSP) show a composition bias toward low complexity. Residues 479-544 (TKSRKSSFKN…NNNNNNNNNN (66 aa)) are a coiled coil. Basic and acidic residues predominate over residues 486-512 (FKNDKDKKEKEKEKGKDKEKEKERVSD). Low complexity-rich tracts occupy residues 530–561 (NNNN…NNNN) and 571–609 (TSNG…NNNN). The RING-type zinc finger occupies 618-653 (CTVCMDNEINTVFLECGHLSCCSLCSVKLKKCPICR).

Ubiquitinated.

The protein localises to the cytoplasm. It localises to the nucleus. It carries out the reaction S-ubiquitinyl-[E2 ubiquitin-conjugating enzyme]-L-cysteine + [acceptor protein]-L-lysine = [E2 ubiquitin-conjugating enzyme]-L-cysteine + N(6)-ubiquitinyl-[acceptor protein]-L-lysine.. Its pathway is protein modification; protein ubiquitination. In terms of biological role, acts as an E3 ubiquitin-protein ligase, which accepts ubiquitin from specific E2 ubiquitin-conjugating enzymes, and then transfers it to substrates promoting their degradation by the proteasome. Up-regulates STATc tyrosine phosphorylation via an inhibitory effect on ptpC accumulation. Recognizes activated receptor tyrosine kinases, RTKs and terminates signaling. This is E3 ubiquitin-protein ligase cblA (cblA-1) from Dictyostelium discoideum (Social amoeba).